The sequence spans 207 residues: MATSSDRLVWIDCEMTGLDLAVDELVEIAVVITDFDLNVLDPGLSIVIKPDASALDNMNDFVREMHTTSGLIEEIPGGVSLAEAEYEALEYVLRFAPAARTAPLAGNTIGTDRMFLAKYMPRLDTHLHYRNVDVSSIKELARRWFPRVYFNAPEKNGGHRALADILESVRELDYYRKAAFVAEPGPTTEQTQAASATIVEKWTARMG.

The region spanning 8-172 is the Exonuclease domain; it reads LVWIDCEMTG…ADILESVREL (165 aa). Tyr129 is a catalytic residue.

Belongs to the oligoribonuclease family.

Its subcellular location is the cytoplasm. Its function is as follows. 3'-to-5' exoribonuclease specific for small oligoribonucleotides. The polypeptide is Oligoribonuclease (Leifsonia xyli subsp. xyli (strain CTCB07)).